The following is a 331-amino-acid chain: Ribosomal RNA small subunit methyltransferase H (331 aa).

S-adenosyl-L-methionine-binding positions include 38-40, Asp56, Phe83, Asp100, and Gln107; that span reads GGY. The interval 287 to 331 is disordered; sequence DEAELAENPRARSARLRVGVRTDAPAGKVDPQALGTPLIPKKGRR.

This sequence belongs to the methyltransferase superfamily. RsmH family.

It localises to the cytoplasm. The enzyme catalyses cytidine(1402) in 16S rRNA + S-adenosyl-L-methionine = N(4)-methylcytidine(1402) in 16S rRNA + S-adenosyl-L-homocysteine + H(+). Its function is as follows. Specifically methylates the N4 position of cytidine in position 1402 (C1402) of 16S rRNA. This Cereibacter sphaeroides (strain ATCC 17023 / DSM 158 / JCM 6121 / CCUG 31486 / LMG 2827 / NBRC 12203 / NCIMB 8253 / ATH 2.4.1.) (Rhodobacter sphaeroides) protein is Ribosomal RNA small subunit methyltransferase H.